Here is a 471-residue protein sequence, read N- to C-terminus: Cysteine--tRNA ligase (471 aa).

C30 is a Zn(2+) binding site. The short motif at 32–42 (PTVYNFAHIGN) is the 'HIGH' region element. The Zn(2+) site is built by C212, H237, and E241. Positions 270–274 (KMSKS) match the 'KMSKS' region motif. K273 serves as a coordination point for ATP.

It belongs to the class-I aminoacyl-tRNA synthetase family. In terms of assembly, monomer. It depends on Zn(2+) as a cofactor.

It is found in the cytoplasm. The enzyme catalyses tRNA(Cys) + L-cysteine + ATP = L-cysteinyl-tRNA(Cys) + AMP + diphosphate. The chain is Cysteine--tRNA ligase from Leptospira interrogans serogroup Icterohaemorrhagiae serovar copenhageni (strain Fiocruz L1-130).